We begin with the raw amino-acid sequence, 777 residues long: Lon protease (777 aa).

One can recognise a Lon N-terminal domain in the interval 11 to 204 (IPVLPLRDVV…FLMAIMETEI (194 aa)). 356 to 363 (GPPGVGKT) lines the ATP pocket. The Lon proteolytic domain occupies 592–773 (LNQIGQVVGL…EEVLKIALEN (182 aa)). Residues Ser679 and Lys722 contribute to the active site.

It belongs to the peptidase S16 family. In terms of assembly, homohexamer. Organized in a ring with a central cavity.

Its subcellular location is the cytoplasm. It catalyses the reaction Hydrolysis of proteins in presence of ATP.. Functionally, ATP-dependent serine protease that mediates the selective degradation of mutant and abnormal proteins as well as certain short-lived regulatory proteins. Required for cellular homeostasis and for survival from DNA damage and developmental changes induced by stress. Degrades polypeptides processively to yield small peptide fragments that are 5 to 10 amino acids long. Binds to DNA in a double-stranded, site-specific manner. The sequence is that of Lon protease from Buchnera aphidicola subsp. Schizaphis graminum (strain Sg).